The following is a 112-amino-acid chain: Protein FAM32A (112 aa).

Positions 23 to 56 are disordered; sequence TKRKKKKKDKDKAKMLEAMGTSKKSEEEKRRCLD. A compositionally biased stretch (basic and acidic residues) spans 45 to 56; it reads KKSEEEKRRCLD.

It belongs to the FAM32 family. Widely expressed, with highest level in pancreas and lowest in muscle.

It localises to the nucleus. May induce G2 arrest and apoptosis. May also increase cell sensitivity to apoptotic stimuli. In cell lines, may play a role in the inhibition of anchor-independent cell growth. In Mus musculus (Mouse), this protein is Protein FAM32A (Fam32a).